Here is a 556-residue protein sequence, read N- to C-terminus: Oxygen-dependent choline dehydrogenase (556 aa).

6-35 serves as a coordination point for FAD; it reads DYIIIGAGSAGNVLAARLTEDPGVTVLLLE. His-475 serves as the catalytic Proton acceptor.

Belongs to the GMC oxidoreductase family. FAD is required as a cofactor.

It carries out the reaction choline + A = betaine aldehyde + AH2. The catalysed reaction is betaine aldehyde + NAD(+) + H2O = glycine betaine + NADH + 2 H(+). The protein operates within amine and polyamine biosynthesis; betaine biosynthesis via choline pathway; betaine aldehyde from choline (cytochrome c reductase route): step 1/1. Its function is as follows. Involved in the biosynthesis of the osmoprotectant glycine betaine. Catalyzes the oxidation of choline to betaine aldehyde and betaine aldehyde to glycine betaine at the same rate. The sequence is that of Oxygen-dependent choline dehydrogenase from Xanthomonas axonopodis pv. citri (strain 306).